Here is a 127-residue protein sequence, read N- to C-terminus: Small ribosomal subunit protein uS11 (127 aa).

The protein belongs to the universal ribosomal protein uS11 family. As to quaternary structure, part of the 30S ribosomal subunit. Interacts with proteins S7 and S18. Binds to IF-3.

In terms of biological role, located on the platform of the 30S subunit, it bridges several disparate RNA helices of the 16S rRNA. Forms part of the Shine-Dalgarno cleft in the 70S ribosome. The chain is Small ribosomal subunit protein uS11 from Rickettsia felis (strain ATCC VR-1525 / URRWXCal2) (Rickettsia azadi).